The following is a 180-amino-acid chain: Small ribosomal subunit protein bS18 (180 aa).

Disordered stretches follow at residues 1-26 (MKNKLKKKKNPKGTKKIKAKAKAHKV) and 53-82 (YSDKESYSDKESYSDKESYSDKESYSDKES).

The protein belongs to the bacterial ribosomal protein bS18 family. In terms of assembly, part of the 30S ribosomal subunit. Forms a tight heterodimer with protein bS6.

Functionally, binds as a heterodimer with protein bS6 to the central domain of the 16S rRNA, where it helps stabilize the platform of the 30S subunit. The polypeptide is Small ribosomal subunit protein bS18 (Karelsulcia muelleri (strain GWSS) (Sulcia muelleri)).